Reading from the N-terminus, the 226-residue chain is Staphylococcal superantigen-like 1 (226 aa).

The first 30 residues, 1–30 (MKFKAIAKASLALGMLATGVITSNVQSVQA), serve as a signal peptide directing secretion.

The protein belongs to the staphylococcal/streptococcal toxin family. Homodimer.

It localises to the secreted. Mediates virulence by proteolytically cleaving host proteins, including collagens types I and IV as well as human cytokines IL8, IL17A, and IFN-gamma. The polypeptide is Staphylococcal superantigen-like 1 (Staphylococcus aureus (strain NCTC 8325 / PS 47)).